Here is a 565-residue protein sequence, read N- to C-terminus: Arginine--tRNA ligase (565 aa).

A 'HIGH' region motif is present at residues 126-136 (ANPTGPLHIGH).

The protein belongs to the class-I aminoacyl-tRNA synthetase family. In terms of assembly, monomer.

The protein localises to the cytoplasm. The catalysed reaction is tRNA(Arg) + L-arginine + ATP = L-arginyl-tRNA(Arg) + AMP + diphosphate. The protein is Arginine--tRNA ligase of Wolbachia sp. subsp. Brugia malayi (strain TRS).